The following is a 119-amino-acid chain: Large ribosomal subunit protein bL20 (119 aa).

Belongs to the bacterial ribosomal protein bL20 family.

In terms of biological role, binds directly to 23S ribosomal RNA and is necessary for the in vitro assembly process of the 50S ribosomal subunit. It is not involved in the protein synthesizing functions of that subunit. The polypeptide is Large ribosomal subunit protein bL20 (Neisseria gonorrhoeae (strain ATCC 700825 / FA 1090)).